The following is a 381-amino-acid chain: Arrestin homolog (381 aa).

This sequence belongs to the arrestin family.

This Heliothis virescens (Tobacco budworm moth) protein is Arrestin homolog.